The primary structure comprises 165 residues: Nucleotide-binding protein CFF8240_1664 (165 aa).

This sequence belongs to the YajQ family.

Its function is as follows. Nucleotide-binding protein. This Campylobacter fetus subsp. fetus (strain 82-40) protein is Nucleotide-binding protein CFF8240_1664.